The primary structure comprises 743 residues: Putative pentatricopeptide repeat-containing protein At1g68930 (743 aa).

PPR repeat units follow at residues 40–70, 71–101, 102–132, 138–172, 173–203, 204–233, 234–268, 269–303, 304–334, 335–369, 370–404, 405–435, 436–470, 471–506, and 507–537; these read ETFL…IPQP, NLFS…LPDR, DGVT…MMRD, TRVT…GFES, YLLV…LDDR, NTVM…GMEK, DSVS…GLKM, DQYP…NFQD, HIYV…MKQK, NVVS…GIDP, DHYT…GLIH, YVTV…MNVR, DAVS…GLKP, DGVT…GIVP, and SIGH…MPFP. Residues 542 to 617 are type E motif; sequence GWTTLLSACR…EPGQSWIKWK (76 aa). Residues 618–648 are type E(+) motif; sequence GKLHSFSADDESSPYLDQIYAKLEELNNKII. The segment at 649 to 743 is type DYW motif; sequence DNGYKPDTSF…DGTCSCGDFW (95 aa).

The protein belongs to the PPR family. PCMP-H subfamily.

This Arabidopsis thaliana (Mouse-ear cress) protein is Putative pentatricopeptide repeat-containing protein At1g68930 (PCMP-H22).